A 234-amino-acid chain; its full sequence is N-acetyl-alpha-D-glucosaminyl L-malate deacetylase 1 (234 aa).

Residues H12, D15, and H113 each coordinate Zn(2+).

It belongs to the PIGL family. Zn(2+) serves as cofactor.

It catalyses the reaction (S)-malyl N-acetyl-alpha-D-glucosaminide + H2O = (S)-malyl alpha-D-glucosaminide + acetate. With respect to regulation, inhibited by BSH. Functionally, involved in bacillithiol (BSH) biosynthesis. Catalyzes the second step of the pathway, the deacetylation of N-acetylglucosaminylmalate (GlcNAc-Mal) to glucosamine malate (GlcN-Mal). This chain is N-acetyl-alpha-D-glucosaminyl L-malate deacetylase 1, found in Bacillus anthracis.